A 138-amino-acid polypeptide reads, in one-letter code: Thyrotropin subunit beta (138 aa).

An N-terminal signal peptide occupies residues 1–20 (MTAIFLMSVLFGLACGQAMS). 6 disulfides stabilise this stretch: cysteine 22–cysteine 72, cysteine 36–cysteine 87, cysteine 39–cysteine 125, cysteine 47–cysteine 103, cysteine 51–cysteine 105, and cysteine 108–cysteine 115. Residue asparagine 43 is glycosylated (N-linked (GlcNAc...) asparagine). Positions 133–138 (VVGLSI) are excised as a propeptide.

This sequence belongs to the glycoprotein hormones subunit beta family. In terms of assembly, heterodimer of a common alpha chain and a unique beta chain which confers biological specificity to thyrotropin, lutropin, follitropin and gonadotropin.

It is found in the secreted. Functionally, indispensable for the control of thyroid structure and metabolism. The chain is Thyrotropin subunit beta (TSHB) from Lama glama (Llama).